Consider the following 532-residue polypeptide: 56 kDa type-specific antigen (532 aa).

A signal peptide spans 1–22 (MKKIMLIASAMSALSLPFSASA). A helical transmembrane segment spans residues 67 to 87 (LTTGLPFGGTLAAGMTIAPGF). 2 disordered regions span residues 113–140 (KGEI…PQPT) and 400–426 (QQEE…SKEG). Positions 403–413 (EDAKNQGKGDC) are enriched in basic and acidic residues. A helical membrane pass occupies residues 480 to 500 (TGMVASGALGVAINAAEGVCV).

It is found in the cell membrane. May be an adherent factor for rickettsial adsorption to the host-cell surface and a determinant of virulence of individual rickettsial strain. It is the major outer membrane protein. The sequence is that of 56 kDa type-specific antigen from Orientia tsutsugamushi (Rickettsia tsutsugamushi).